Reading from the N-terminus, the 62-residue chain is Photosystem II reaction center protein Z (62 aa).

Transmembrane regions (helical) follow at residues alanine 8–alanine 28 and phenylalanine 41–isoleucine 61.

The protein belongs to the PsbZ family. PSII is composed of 1 copy each of membrane proteins PsbA, PsbB, PsbC, PsbD, PsbE, PsbF, PsbH, PsbI, PsbJ, PsbK, PsbL, PsbM, PsbT, PsbY, PsbZ, Psb30/Ycf12, at least 3 peripheral proteins of the oxygen-evolving complex and a large number of cofactors. It forms dimeric complexes.

The protein resides in the plastid. It localises to the chloroplast thylakoid membrane. Its function is as follows. May control the interaction of photosystem II (PSII) cores with the light-harvesting antenna, regulates electron flow through the 2 photosystem reaction centers. PSII is a light-driven water plastoquinone oxidoreductase, using light energy to abstract electrons from H(2)O, generating a proton gradient subsequently used for ATP formation. This chain is Photosystem II reaction center protein Z, found in Nymphaea alba (White water-lily).